Reading from the N-terminus, the 59-residue chain is Sec-independent protein translocase protein TatA (59 aa).

A helical membrane pass occupies residues 1–21 (MGRLGLTEILVIVGIVILLFG).

It belongs to the TatA/E family. As to quaternary structure, forms a complex with TatC.

It is found in the cell inner membrane. Functionally, part of the twin-arginine translocation (Tat) system that transports large folded proteins containing a characteristic twin-arginine motif in their signal peptide across membranes. TatA could form the protein-conducting channel of the Tat system. The sequence is that of Sec-independent protein translocase protein TatA from Flavobacterium johnsoniae (strain ATCC 17061 / DSM 2064 / JCM 8514 / BCRC 14874 / CCUG 350202 / NBRC 14942 / NCIMB 11054 / UW101) (Cytophaga johnsonae).